Here is a 534-residue protein sequence, read N- to C-terminus: Neryl diphosphate diphosphatase, chloroplastic (534 aa).

Asp-272, Asp-276, Asp-416, and Glu-424 together coordinate Mg(2+). Residues 272-276 carry the DDXXD motif motif; the sequence is DDIFD.

This sequence belongs to the terpene synthase family. Mg(2+) serves as cofactor.

Its subcellular location is the plastid. The protein resides in the chloroplast. The catalysed reaction is neryl diphosphate + H2O = nerol + diphosphate. It functions in the pathway secondary metabolite biosynthesis; terpenoid biosynthesis. In terms of biological role, monoterpene synthase that catalyzes the hydrolysis of neryl diphosphate (NPP) to form nerol and diphosphate. Is specific for NPP and has no hydrolase activity toward geranyl diphosphate (GPP) or farnesyl diphosphate (FPP). The monoterpene nerol may have an insect repellent effect for the plant leaves. In Glycine max (Soybean), this protein is Neryl diphosphate diphosphatase, chloroplastic.